Here is a 288-residue protein sequence, read N- to C-terminus: 4-diphosphocytidyl-2-C-methyl-D-erythritol kinase (288 aa).

Residue lysine 19 is part of the active site. Position 102–112 (102–112) interacts with ATP; sequence PMGGGIGGGSS. Aspartate 144 is an active-site residue.

The protein belongs to the GHMP kinase family. IspE subfamily.

The catalysed reaction is 4-CDP-2-C-methyl-D-erythritol + ATP = 4-CDP-2-C-methyl-D-erythritol 2-phosphate + ADP + H(+). The protein operates within isoprenoid biosynthesis; isopentenyl diphosphate biosynthesis via DXP pathway; isopentenyl diphosphate from 1-deoxy-D-xylulose 5-phosphate: step 3/6. Its function is as follows. Catalyzes the phosphorylation of the position 2 hydroxy group of 4-diphosphocytidyl-2C-methyl-D-erythritol. The protein is 4-diphosphocytidyl-2-C-methyl-D-erythritol kinase of Pseudomonas savastanoi pv. phaseolicola (strain 1448A / Race 6) (Pseudomonas syringae pv. phaseolicola (strain 1448A / Race 6)).